The following is a 1587-amino-acid chain: Pentafunctional AROM polypeptide (1587 aa).

The tract at residues M1–N384 is 3-dehydroquinate synthase. NAD(+) contacts are provided by residues D44–N46, E81–K84, G114–V116, and D119. R130 is a binding site for 7-phospho-2-dehydro-3-deoxy-D-arabino-heptonate. T139–T140 contributes to the NAD(+) binding site. D146 and K152 together coordinate 7-phospho-2-dehydro-3-deoxy-D-arabino-heptonate. Residue K161 coordinates NAD(+). N162 serves as a coordination point for 7-phospho-2-dehydro-3-deoxy-D-arabino-heptonate. Residues F179–T182 and N190 contribute to the NAD(+) site. Position 194 (E194) interacts with Zn(2+). 7-phospho-2-dehydro-3-deoxy-D-arabino-heptonate contacts are provided by residues E194 to K197 and K250. E260 acts as the Proton acceptor; for 3-dehydroquinate synthase activity in catalysis. Residues R264 to N268 and H271 each bind 7-phospho-2-dehydro-3-deoxy-D-arabino-heptonate. Residue H271 participates in Zn(2+) binding. The active-site Proton acceptor; for 3-dehydroquinate synthase activity is the H275. Positions 287 and 356 each coordinate 7-phospho-2-dehydro-3-deoxy-D-arabino-heptonate. H287 contributes to the Zn(2+) binding site. The EPSP synthase stretch occupies residues V397–V842. C824 serves as the catalytic For EPSP synthase activity. Positions S864–S1055 are shikimate kinase. Residue G871–T878 coordinates ATP. The interval L1056–E1276 is 3-dehydroquinase. Residue H1179 is the Proton acceptor; for 3-dehydroquinate dehydratase activity of the active site. K1207 acts as the Schiff-base intermediate with substrate; for 3-dehydroquinate dehydratase activity in catalysis. A shikimate dehydrogenase region spans residues K1289–D1587.

It in the N-terminal section; belongs to the sugar phosphate cyclases superfamily. Dehydroquinate synthase family. The protein in the 2nd section; belongs to the EPSP synthase family. In the 3rd section; belongs to the shikimate kinase family. This sequence in the 4th section; belongs to the type-I 3-dehydroquinase family. It in the C-terminal section; belongs to the shikimate dehydrogenase family. Homodimer. Zn(2+) is required as a cofactor.

It localises to the cytoplasm. It carries out the reaction 7-phospho-2-dehydro-3-deoxy-D-arabino-heptonate = 3-dehydroquinate + phosphate. The catalysed reaction is 3-dehydroquinate = 3-dehydroshikimate + H2O. It catalyses the reaction shikimate + NADP(+) = 3-dehydroshikimate + NADPH + H(+). The enzyme catalyses shikimate + ATP = 3-phosphoshikimate + ADP + H(+). It carries out the reaction 3-phosphoshikimate + phosphoenolpyruvate = 5-O-(1-carboxyvinyl)-3-phosphoshikimate + phosphate. It participates in metabolic intermediate biosynthesis; chorismate biosynthesis; chorismate from D-erythrose 4-phosphate and phosphoenolpyruvate: step 2/7. The protein operates within metabolic intermediate biosynthesis; chorismate biosynthesis; chorismate from D-erythrose 4-phosphate and phosphoenolpyruvate: step 3/7. Its pathway is metabolic intermediate biosynthesis; chorismate biosynthesis; chorismate from D-erythrose 4-phosphate and phosphoenolpyruvate: step 4/7. It functions in the pathway metabolic intermediate biosynthesis; chorismate biosynthesis; chorismate from D-erythrose 4-phosphate and phosphoenolpyruvate: step 5/7. It participates in metabolic intermediate biosynthesis; chorismate biosynthesis; chorismate from D-erythrose 4-phosphate and phosphoenolpyruvate: step 6/7. In terms of biological role, the AROM polypeptide catalyzes 5 consecutive enzymatic reactions in prechorismate polyaromatic amino acid biosynthesis. The sequence is that of Pentafunctional AROM polypeptide from Aspergillus clavatus (strain ATCC 1007 / CBS 513.65 / DSM 816 / NCTC 3887 / NRRL 1 / QM 1276 / 107).